Here is a 160-residue protein sequence, read N- to C-terminus: Cytochrome b6-f complex subunit 4 (160 aa).

The next 3 membrane-spanning stretches (helical) occupy residues 36-56 (LLYT…GLAV), 95-115 (LLGI…PFIE), and 127-147 (PIAM…GVAA).

This sequence belongs to the cytochrome b family. PetD subfamily. As to quaternary structure, the 4 large subunits of the cytochrome b6-f complex are cytochrome b6, subunit IV (17 kDa polypeptide, PetD), cytochrome f and the Rieske protein, while the 4 small subunits are PetG, PetL, PetM and PetN. The complex functions as a dimer.

The protein localises to the cellular thylakoid membrane. Its function is as follows. Component of the cytochrome b6-f complex, which mediates electron transfer between photosystem II (PSII) and photosystem I (PSI), cyclic electron flow around PSI, and state transitions. The protein is Cytochrome b6-f complex subunit 4 of Prochlorothrix hollandica.